Reading from the N-terminus, the 63-residue chain is Parvalbumin alpha (63 aa).

EF-hand domains lie at 28–38 (IEEEELGLILK) and 39–63 (VLLA…LVSE). Positions 29, 32, 45, 47, 49, 51, and 56 each coordinate Ca(2+).

Detected in muscle and cutaneous mucus. In the skin, detected in cells in the basal region of the glandular epithelium of the dermal mucus glands (at protein level).

The protein localises to the cytoplasm. The protein resides in the secreted. Its function is as follows. In muscle, parvalbumin is thought to be involved in relaxation after contraction. It binds two calcium ions. The polypeptide is Parvalbumin alpha (Rana temporaria (European common frog)).